Consider the following 105-residue polypeptide: MKNKIKIRLKSFDHRSLDQATKEIVSAVKRTFANINGPIPLPKKIGRFTVNRSPHVHKKSREQFEIRKHKRLLVIGDPNPAVVDALSKVDLAAGVDVVIELESGE.

The protein belongs to the universal ribosomal protein uS10 family. Part of the 30S ribosomal subunit.

Involved in the binding of tRNA to the ribosomes. This chain is Small ribosomal subunit protein uS10, found in Rickettsia conorii (strain ATCC VR-613 / Malish 7).